The chain runs to 444 residues: MLLDAGPQYPAIGVTTFGSSRHHSAADVTDREVGLGINPFADGMGAFKLNPGGHELASAGQTAFTSQAPGYAAALGHHHHPPHVGSYSSAAFNSTRDFLFRNRGFGEAAAASAQHSLFASAAGGFGGPHGHGDAAGHILFPGLHEQAAGHASPNVVNGQMRLGFSGDMYGRAEQYGQVTSPRSEHYASSQLHGYGHMNMNMAAHHGAGAFFRYMRQPIKQELICKWIEPEQLANPKKSCNKTFSTMHELVTHVTVEHVGGPEQSNHICFWEECPREGKPFKAKYKLVNHIRVHTGEKPFPCPFPGCGKVFARSENLKIHKRTHTGEKPFKCEFEGCDRRFANSSDRKKHMHVHTSDKPYLCKMCDKSYTHPSSLRKHMKVHESSSQGSQPSPAASSGYESSTPPTIVSPSTENQTASSLSPSSSAGHHTASHSTLTSNFNEWYV.

Residues 222–257 (LICKWIEPEQLANPKKSCNKTFSTMHELVTHVTVEH) form a C2H2-type 1 zinc finger. The C2H2-type 2; degenerate zinc-finger motif lies at 271 to 293 (EECPREGKPFKAKYKLVNHIRVH). 3 C2H2-type zinc fingers span residues 299 to 323 (FPCP…KRTH), 329 to 353 (FKCE…MHVH), and 359 to 381 (YLCK…MKVH). Residues 372 to 432 (SSLRKHMKVH…SSAGHHTASH (61 aa)) are disordered. Over residues 383-432 (SSSQGSQPSPAASSGYESSTPPTIVSPSTENQTASSLSPSSSAGHHTASH) the composition is skewed to low complexity.

It belongs to the GLI C2H2-type zinc-finger protein family.

The protein resides in the nucleus. The protein localises to the cytoplasm. Functionally, acts as a transcriptional activator. Involved in neurogenesis. Plays important roles in the early stage of organogenesis of the CNS, as well as during dorsal spinal cord development and maturation of the cerebellum. Binds to the minimal GLI-consensus sequence 5'-TGGGTGGTC-3'. This chain is Zinc finger protein ZIC 1 (ZIC1), found in Gallus gallus (Chicken).